We begin with the raw amino-acid sequence, 309 residues long: Isoaspartyl peptidase/L-asparaginase (309 aa).

Threonine 166 serves as the catalytic Nucleophile. Residues 194–197 and 217–220 contribute to the substrate site; these read RVGD and TGHG.

It belongs to the Ntn-hydrolase family. In terms of assembly, heterodimer of an alpha and beta chain produced by autocleavage. In terms of processing, cleaved into an alpha and beta chain by autocatalysis; this activates the enzyme. The N-terminal residue of the beta subunit is responsible for the nucleophile hydrolase activity.

The protein resides in the cytoplasm. The catalysed reaction is L-asparagine + H2O = L-aspartate + NH4(+). It catalyses the reaction Cleavage of a beta-linked Asp residue from the N-terminus of a polypeptide.. Functionally, has both L-asparaginase and beta-aspartyl peptidase activity. Does not have aspartylglucosaminidase activity and is inactive toward GlcNAc-L-Asn. Likewise, has no activity toward glutamine. The sequence is that of Isoaspartyl peptidase/L-asparaginase (asrgl1) from Xenopus laevis (African clawed frog).